A 426-amino-acid chain; its full sequence is Glutamate-1-semialdehyde 2,1-aminomutase (426 aa).

Position 265 is an N6-(pyridoxal phosphate)lysine (lysine 265).

It belongs to the class-III pyridoxal-phosphate-dependent aminotransferase family. HemL subfamily. As to quaternary structure, homodimer. Pyridoxal 5'-phosphate is required as a cofactor.

The protein resides in the cytoplasm. The enzyme catalyses (S)-4-amino-5-oxopentanoate = 5-aminolevulinate. Its pathway is porphyrin-containing compound metabolism; protoporphyrin-IX biosynthesis; 5-aminolevulinate from L-glutamyl-tRNA(Glu): step 2/2. This chain is Glutamate-1-semialdehyde 2,1-aminomutase, found in Yersinia pseudotuberculosis serotype O:1b (strain IP 31758).